Reading from the N-terminus, the 633-residue chain is GTPase-activating protein GYP3 (633 aa).

Residues 26-127 (AFTVKSPSVP…HSDDLDLVPD (102 aa)) are disordered. A compositionally biased stretch (basic and acidic residues) spans 37 to 47 (FHDKMHSDHSS). The span at 99–115 (GEDDDDNNGDNGNEDLE) shows a compositional bias: acidic residues. A Phosphoserine modification is found at serine 147. The 234-residue stretch at 223–456 (GIPAEWRGNA…RIWDCLFYEE (234 aa)) folds into the Rab-GAP TBC domain. A Phosphoserine modification is found at serine 484.

It localises to the cytoplasm. Its subcellular location is the bud. The protein localises to the bud neck. Regulates exocytosis by functioning as a GAP for SEC4. Stimulates specifically the GTPase activity of YPT6. Also required for efficient polarization of the actin patches. The chain is GTPase-activating protein GYP3 (MSB3) from Saccharomyces cerevisiae (strain ATCC 204508 / S288c) (Baker's yeast).